A 117-amino-acid polypeptide reads, in one-letter code: Gamma-aminobutyric acid receptor-associated protein (117 aa).

An interaction with beta-tubulin region spans residues 1–22 (MKFVYKEEHPFEKRRSEGEKIR). Positions 36–68 (APKARIGDLDKKKYLVPSDLTVGQFYFLIRKRI) are interaction with GABRG2. An interaction with GPHN region spans residues 36–117 (APKARIGDLD…AYSDESVYGL (82 aa)). The tract at residues 48–50 (KYL) is interaction with LIR (LC3 nteracting Region) motif of ATG3. Glycine 116 carries the Phosphatidylethanolamine amidated glycine; alternate lipid modification. The Phosphatidylserine amidated glycine; alternate moiety is linked to residue glycine 116. A propeptide (removed in mature form) is located at residue leucine 117.

The protein belongs to the ATG8 family. As to quaternary structure, interacts with GPHN and NSF. Interacts with ATG3, ATG7 and ATG13. Interacts with alpha-tubulin. Interacts with beta-tubulin. Interacts with GABRG2. Interacts with RB1CC1. Interacts with ULK1. Interacts with CALR. Interacts with DDX47. Interacts with TP53INP1 and TP53INP2. Interacts with TBC1D5. Interacts with TBC1D25. Directly interacts with SQSTM1. Interacts with MAPK15. Interacts with TECPR2. Interacts with PCM1. Interacts with TRIM5 and TRIM21. Interacts with MEFV. Interacts with KIF21B. Interacts with WDFY3; this interaction is required for WDFY3 recruitment to MAP1LC3B-positive p62/SQSTM1 bodies. Interacts with FLCN; interaction regulates autophagy. Interacts with UBA5. Interacts with KBTBD6 and KBTBD7; the interaction is direct and required for the ubiquitination of TIAM1. Interacts with reticulophagy regulators RETREG1, RETREG2 and RETREG3. Interacts with IRGM. Interacts with STX17. Interacts with CT55; this interaction may be important for GABARAP protein stability. Interacts with DNM2. Interacts with NCOA4 (via C-terminus). Post-translationally, the precursor molecule is cleaved by ATG4 (ATG4A, ATG4B, ATG4C or ATG4D) to expose the glycine at the C-terminus and form the cytosolic form, GABARAP-I. The processed form is then activated by APG7L/ATG7, transferred to ATG3 and conjugated to phosphatidylethanolamine (PE) phospholipid to form the membrane-bound form, GABARAP-II. During non-canonical autophagy, the processed form is conjugated to phosphatidylserine (PS) phospholipid. ATG4 proteins also mediate the delipidation of PE-conjugated forms. In addition, ATG4B and ATG4D mediate delipidation of ATG8 proteins conjugated to PS during non-canonical autophagy. ATG4B constitutes the major protein for proteolytic activation. ATG4D is the main enzyme for delipidation activity. Expressed in brain (at protein level). Can be found in both somatodendritic and axonal compartment of neurons.

It is found in the cytoplasmic vesicle. The protein localises to the autophagosome membrane. It localises to the endomembrane system. The protein resides in the cytoplasm. Its subcellular location is the cytoskeleton. It is found in the golgi apparatus membrane. Ubiquitin-like modifier that plays a role in intracellular transport of GABA(A) receptors and its interaction with the cytoskeleton. Involved in autophagy: while LC3s are involved in elongation of the phagophore membrane, the GABARAP/GATE-16 subfamily is essential for a later stage in autophagosome maturation. Through its interaction with the reticulophagy receptor TEX264, participates in the remodeling of subdomains of the endoplasmic reticulum into autophagosomes upon nutrient stress, which then fuse with lysosomes for endoplasmic reticulum turnover. Also required for the local activation of the CUL3(KBTBD6/7) E3 ubiquitin ligase complex, regulating ubiquitination a nd degradation of TIAM1, a guanyl-nucleotide exchange factor (GEF) that activates RAC1 and downstream signal transduction. Thereby, regulates different biological processes including the organization of the cytoskeleton, cell migration and proliferation. Involved in apoptosis. This chain is Gamma-aminobutyric acid receptor-associated protein, found in Rattus norvegicus (Rat).